The primary structure comprises 165 residues: Large ribosomal subunit protein uL15 (165 aa).

Positions 1–29 (MTSKKKRQRGSRTHGGGSHKNRRGAGHRG) are enriched in basic residues. 2 disordered regions span residues 1–59 (MTSK…QKVQ) and 133–165 (KVEG…ADEE). The span at 30–47 (GRGDAGRDKHEFHNHEPL) shows a compositional bias: basic and acidic residues. A compositionally biased stretch (acidic residues) spans 154–165 (AEETEDADADEE).

This sequence belongs to the universal ribosomal protein uL15 family. In terms of assembly, part of the 50S ribosomal subunit. Interacts weakly with proteins L18e and L32e.

In terms of biological role, binds to the 23S rRNA. The chain is Large ribosomal subunit protein uL15 (rpl15) from Haloarcula marismortui (strain ATCC 43049 / DSM 3752 / JCM 8966 / VKM B-1809) (Halobacterium marismortui).